Reading from the N-terminus, the 94-residue chain is Selenoprotein K (94 aa).

The helical transmembrane segment at leucine 20–valine 42 threads the bilayer. The tract at residues lysine 48–arginine 94 is disordered. The span at aspartate 49–phenylalanine 58 shows a compositional bias: polar residues. Position 92 (selenocysteine 92) is a non-standard amino acid, selenocysteine.

Belongs to the selenoprotein K family.

It is found in the endoplasmic reticulum membrane. It localises to the cell membrane. Functionally, required for Ca(2+) flux in immune cells and plays a role in T-cell proliferation and in T-cell and neutrophil migration. Involved in endoplasmic reticulum-associated degradation (ERAD) of soluble glycosylated proteins. Required for cell surface expression of CD36 and involved in macrophage uptake of low-density lipoprotein and in foam cell formation. Required for palmitoylation. This is Selenoprotein K (selenok) from Danio rerio (Zebrafish).